We begin with the raw amino-acid sequence, 347 residues long: MASNSALLMKTIFLVLIFVSFAISPATSTAPEECGSESANPCVNKAKALPLKVIAIFVILIASMIGVGAPLFSRNVSFLQPDGNIFTIIKCFASGIILGTGFMHVLPDSFEMLSSICLEENPWHKFPFSGFLAMLSGLITLAIDSMATSLYTSKNAVGIMPHGHGHGHGPANDVTLPIKEDDSSNAQLLRYRVIAMVLELGIIVHSVVIGLSLGATSDTCTIKGLIAALCFHQMFEGMGLGGCILQAEYTNMKKFVMAFFFAVTTPFGIALGIALSTVYQDNSPKALITVGLLNACSAGLLIYMALVDLLAAEFMGPKLQGSIKMQFKCLIAALLGCGGMSIIAKWA.

The first 22 residues, 1 to 22 (MASNSALLMKTIFLVLIFVSFA), serve as a signal peptide directing secretion. At 23-52 (ISPATSTAPEECGSESANPCVNKAKALPLK) the chain is on the extracellular side. Residues 53–73 (VIAIFVILIASMIGVGAPLFS) traverse the membrane as a helical segment. Residues 74–84 (RNVSFLQPDGN) are Cytoplasmic-facing. The helical transmembrane segment at 85–105 (IFTIIKCFASGIILGTGFMHV) threads the bilayer. The Extracellular segment spans residues 106–125 (LPDSFEMLSSICLEENPWHK). Residues 126 to 146 (FPFSGFLAMLSGLITLAIDSM) form a helical membrane-spanning segment. Topologically, residues 147–192 (ATSLYTSKNAVGIMPHGHGHGHGPANDVTLPIKEDDSSNAQLLRYR) are cytoplasmic. Residues K154 and K179 each participate in a glycyl lysine isopeptide (Lys-Gly) (interchain with G-Cter in ubiquitin) cross-link. A helical transmembrane segment spans residues 193-213 (VIAMVLELGIIVHSVVIGLSL). The Extracellular segment spans residues 214–224 (GATSDTCTIKG). The chain crosses the membrane as a helical span at residues 225 to 245 (LIAALCFHQMFEGMGLGGCIL). The Cytoplasmic portion of the chain corresponds to 246-254 (QAEYTNMKK). Residues 255–275 (FVMAFFFAVTTPFGIALGIAL) traverse the membrane as a helical segment. Residues 276 to 286 (STVYQDNSPKA) are Extracellular-facing. Residues 287 to 307 (LITVGLLNACSAGLLIYMALV) traverse the membrane as a helical segment. The Cytoplasmic segment spans residues 308–326 (DLLAAEFMGPKLQGSIKMQ). The chain crosses the membrane as a helical span at residues 327-347 (FKCLIAALLGCGGMSIIAKWA).

The protein belongs to the ZIP transporter (TC 2.A.5) family. As to quaternary structure, interacts with FREE1. Monoubiquitinated on several Lys residues. Monoubiquitination controls trafficking from the plasma membrane and targeting to the vacuole. Expressed in the external cell layers of the root including the lateral branching zone. Also detected in flowers before pollination.

It is found in the cell membrane. The protein localises to the early endosome. Its subcellular location is the golgi apparatus. It localises to the trans-Golgi network. The protein resides in the vacuole. High-affinity iron transporter that plays a key role in the uptake of iron from the rhizosphere across the plasma membrane in the root epidermal layer. Acts as the principal regulator of iron homeostasis in planta. Also mediates the heavy metals uptake under iron-deficiency by its ability to transport cobalt, cadmium, manganese and/or zinc ions. The sequence is that of Fe(2+) transport protein 1 (IRT1) from Arabidopsis thaliana (Mouse-ear cress).